A 152-amino-acid polypeptide reads, in one-letter code: Chemokine-like factor (152 aa).

Positions 13–133 (FCCTLKCFVK…DCALMCQKLR (121 aa)) constitute an MARVEL domain. Transmembrane regions (helical) follow at residues 19–39 (CFVKFLRLVVTVTSMIFFIVG), 46–66 (IVITGFEVTVIFCFLVLYTCG), 81–101 (VINSMVTALCMLIVSVLALIP), and 108–128 (ILGGVFGFLTVTCTIADCALM).

This sequence belongs to the chemokine-like factor family. Ubiquitous.

It is found in the membrane. May play an important role in inflammation and regeneration of skeletal muscle. Essential for embryonic development. The chain is Chemokine-like factor (Cklf) from Mus musculus (Mouse).